We begin with the raw amino-acid sequence, 400 residues long: Probable peptidoglycan D,D-transpeptidase PenA (400 aa).

Positions asparagine 1–glutamate 21 are disordered. The active-site Acyl-ester intermediate is serine 128.

Belongs to the transpeptidase family. FtsI subfamily.

Its subcellular location is the cell inner membrane. The catalysed reaction is Preferential cleavage: (Ac)2-L-Lys-D-Ala-|-D-Ala. Also transpeptidation of peptidyl-alanyl moieties that are N-acyl substituents of D-alanine.. The protein operates within cell wall biogenesis; peptidoglycan biosynthesis. Its function is as follows. Catalyzes cross-linking of the peptidoglycan cell wall at the division septum. The chain is Probable peptidoglycan D,D-transpeptidase PenA from Neisseria flavescens.